The primary structure comprises 205 residues: Putative 3-methyladenine DNA glycosylase (205 aa).

Belongs to the DNA glycosylase MPG family.

The sequence is that of Putative 3-methyladenine DNA glycosylase from Bacillus thuringiensis (strain Al Hakam).